The following is a 404-amino-acid chain: G1/S-specific cyclin-E2 (404 aa).

The segment at Met-1–Glu-44 is disordered. Residues Gln-12–Gln-26 are compositionally biased toward low complexity. At Ser-21 the chain carries Phosphoserine. Residues Thr-35–Glu-44 are compositionally biased toward basic and acidic residues. N6-lactoyllysine is present on Lys-348. A Phosphoserine modification is found at Ser-383. Residue Thr-392 is modified to Phosphothreonine.

Belongs to the cyclin family. Cyclin E subfamily. Interacts with the CDK2 (in vivo) and CDK3 (in vitro) protein kinases to form a serine/threonine kinase holoenzyme complex. The cyclin subunit imparts substrate specificity to the complex. In terms of processing, phosphorylation by CDK2 triggers its release from CDK2 and degradation via the ubiquitin proteasome pathway. Lactylated at Lys-348. Delactylated by SIRT3. In terms of tissue distribution, according to PubMed:9858585, highest levels of expression in adult testis, thymus and brain. Lower levels in placenta, spleen and colon. Consistently elevated levels in tumor-derived cells compared to non-transformed proliferating cells. According to PubMed:9840927: low levels in thymus, prostate, brain, skeletal muscle, and kidney. Elevated levels in lung. According to PubMed:9840943 highly expressed in testis, placenta, thymus and brain. In a lesser extent in small intestine and colon.

The protein localises to the nucleus. Functionally, essential for the control of the cell cycle at the late G1 and early S phase. The polypeptide is G1/S-specific cyclin-E2 (CCNE2) (Homo sapiens (Human)).